Reading from the N-terminus, the 259-residue chain is 3-methyl-2-oxobutanoate hydroxymethyltransferase (259 aa).

The Mg(2+) site is built by Asp44 and Asp83. 3-methyl-2-oxobutanoate-binding positions include 44–45 (DS), Asp83, and Lys113. Mg(2+) is bound at residue Glu115. Residue Glu183 is the Proton acceptor of the active site.

This sequence belongs to the PanB family. In terms of assembly, homodecamer; pentamer of dimers. Mg(2+) is required as a cofactor.

It localises to the cytoplasm. The enzyme catalyses 3-methyl-2-oxobutanoate + (6R)-5,10-methylene-5,6,7,8-tetrahydrofolate + H2O = 2-dehydropantoate + (6S)-5,6,7,8-tetrahydrofolate. It functions in the pathway cofactor biosynthesis; (R)-pantothenate biosynthesis; (R)-pantoate from 3-methyl-2-oxobutanoate: step 1/2. In terms of biological role, catalyzes the reversible reaction in which hydroxymethyl group from 5,10-methylenetetrahydrofolate is transferred onto alpha-ketoisovalerate to form ketopantoate. This is 3-methyl-2-oxobutanoate hydroxymethyltransferase from Acaryochloris marina (strain MBIC 11017).